The primary structure comprises 333 residues: Probable tRNA-dihydrouridine synthase 1 (333 aa).

FMN is bound by residues 17–19 and Gln-71; that span reads PMA. The Proton donor role is filled by Cys-102. FMN is bound by residues Lys-141, 202–204, and 226–227; these read NGD and GR.

This sequence belongs to the Dus family. FMN serves as cofactor.

The catalysed reaction is a 5,6-dihydrouridine in tRNA + NAD(+) = a uridine in tRNA + NADH + H(+). It carries out the reaction a 5,6-dihydrouridine in tRNA + NADP(+) = a uridine in tRNA + NADPH + H(+). Functionally, catalyzes the synthesis of 5,6-dihydrouridine (D), a modified base found in the D-loop of most tRNAs, via the reduction of the C5-C6 double bond in target uridines. The sequence is that of Probable tRNA-dihydrouridine synthase 1 (dus1) from Bacillus subtilis (strain 168).